A 152-amino-acid chain; its full sequence is Arginine repressor (152 aa).

The protein belongs to the ArgR family.

It is found in the cytoplasm. The protein operates within amino-acid biosynthesis; L-arginine biosynthesis [regulation]. In terms of biological role, regulates arginine biosynthesis genes. The polypeptide is Arginine repressor (Lactiplantibacillus plantarum (strain ATCC BAA-793 / NCIMB 8826 / WCFS1) (Lactobacillus plantarum)).